A 163-amino-acid chain; its full sequence is Cytochrome c-type biogenesis protein CcmE (163 aa).

Residues 1-8 are Cytoplasmic-facing; it reads MNPRRKKR. Residues 9-29 form a helical; Signal-anchor for type II membrane protein membrane-spanning segment; sequence LTIILAISAGLAAVIGLVLYA. Residues 30–163 are Periplasmic-facing; sequence LSQNIDLFYT…TEAQLKGSKQ (134 aa). Heme-binding residues include His131 and Tyr135.

The protein belongs to the CcmE/CycJ family.

The protein localises to the cell inner membrane. In terms of biological role, heme chaperone required for the biogenesis of c-type cytochromes. Transiently binds heme delivered by CcmC and transfers the heme to apo-cytochromes in a process facilitated by CcmF and CcmH. This is Cytochrome c-type biogenesis protein CcmE from Aeromonas hydrophila subsp. hydrophila (strain ATCC 7966 / DSM 30187 / BCRC 13018 / CCUG 14551 / JCM 1027 / KCTC 2358 / NCIMB 9240 / NCTC 8049).